The chain runs to 245 residues: Uridylate kinase (245 aa).

20 to 23 (KLSG) contributes to the ATP binding site. Residue Gly60 coordinates UMP. Gly61 and Arg65 together coordinate ATP. Residues Asp80 and 141 to 148 (AGLPYFST) contribute to the UMP site. ATP is bound by residues Tyr175 and Asp178.

This sequence belongs to the UMP kinase family. Homohexamer.

It is found in the cytoplasm. The catalysed reaction is UMP + ATP = UDP + ADP. The protein operates within pyrimidine metabolism; CTP biosynthesis via de novo pathway; UDP from UMP (UMPK route): step 1/1. With respect to regulation, inhibited by UTP. Its function is as follows. Catalyzes the reversible phosphorylation of UMP to UDP. This Paenarthrobacter aurescens (strain TC1) protein is Uridylate kinase.